We begin with the raw amino-acid sequence, 211 residues long: Dephospho-CoA kinase (211 aa).

The DPCK domain occupies 2–204; sequence IIGLTGSIGM…SGVRRWRRGK (203 aa). 10–15 provides a ligand contact to ATP; the sequence is GMGKST.

This sequence belongs to the CoaE family.

It localises to the cytoplasm. The enzyme catalyses 3'-dephospho-CoA + ATP = ADP + CoA + H(+). The protein operates within cofactor biosynthesis; coenzyme A biosynthesis; CoA from (R)-pantothenate: step 5/5. In terms of biological role, catalyzes the phosphorylation of the 3'-hydroxyl group of dephosphocoenzyme A to form coenzyme A. This is Dephospho-CoA kinase from Rhodospirillum rubrum (strain ATCC 11170 / ATH 1.1.1 / DSM 467 / LMG 4362 / NCIMB 8255 / S1).